The primary structure comprises 582 residues: Trans-ocimene synthase, chloroplastic (582 aa).

The transit peptide at 1–35 (MSLIIQSLPHWSRIPPRPPQLSQFQNSSRPKPLIQ) directs the protein to the chloroplast. Residues Arg296, Asp333, Asp337, Arg474, and Asp477 each coordinate (2E)-geranyl diphosphate. Residues Asp333 and Asp337 each coordinate Mg(2+). Residues 333 to 337 (DDIYD) carry the DDXXD motif motif. Positions 477, 481, and 485 each coordinate Mg(2+).

This sequence belongs to the terpene synthase family. Tpsb subfamily. As to quaternary structure, monomer. The cofactor is Mg(2+). It depends on Mn(2+) as a cofactor. Expressed in male and female leaves. Barely detectable in fruits and shoots.

It localises to the plastid. The protein resides in the chloroplast. It catalyses the reaction (2E)-geranyl diphosphate = (E)-beta-ocimene + diphosphate. The protein operates within secondary metabolite biosynthesis; terpenoid biosynthesis. Its function is as follows. Monoterpene synthase (TPS) involved in the biosynthesis of monoterpene natural products used by traditional Chinese medicine to treat headache, inflammation and intoxication. Catalyzes the conversion of (2E)-geranyl diphosphate (GPP) into (E)-beta-ocimene. This Litsea cubeba (Aromatic litsea) protein is Trans-ocimene synthase, chloroplastic.